The chain runs to 943 residues: Isoleucine--tRNA ligase (943 aa).

A 'HIGH' region motif is present at residues 58–68; sequence PYANGTIHIGH. Position 567 (Glu567) interacts with L-isoleucyl-5'-AMP. The 'KMSKS' region signature appears at 608-612; it reads KMSKS. Lys611 is a binding site for ATP. The Zn(2+) site is built by Cys906, Cys909, Cys926, and Cys929.

Belongs to the class-I aminoacyl-tRNA synthetase family. IleS type 1 subfamily. In terms of assembly, monomer. Requires Zn(2+) as cofactor.

The protein resides in the cytoplasm. It carries out the reaction tRNA(Ile) + L-isoleucine + ATP = L-isoleucyl-tRNA(Ile) + AMP + diphosphate. In terms of biological role, catalyzes the attachment of isoleucine to tRNA(Ile). As IleRS can inadvertently accommodate and process structurally similar amino acids such as valine, to avoid such errors it has two additional distinct tRNA(Ile)-dependent editing activities. One activity is designated as 'pretransfer' editing and involves the hydrolysis of activated Val-AMP. The other activity is designated 'posttransfer' editing and involves deacylation of mischarged Val-tRNA(Ile). This chain is Isoleucine--tRNA ligase, found in Pseudomonas syringae pv. tomato (strain ATCC BAA-871 / DC3000).